A 118-amino-acid chain; its full sequence is Nucleoid-associated protein CTN_1899 (118 aa).

This sequence belongs to the YbaB/EbfC family. Homodimer.

The protein localises to the cytoplasm. The protein resides in the nucleoid. In terms of biological role, binds to DNA and alters its conformation. May be involved in regulation of gene expression, nucleoid organization and DNA protection. This is Nucleoid-associated protein CTN_1899 from Thermotoga neapolitana (strain ATCC 49049 / DSM 4359 / NBRC 107923 / NS-E).